The primary structure comprises 294 residues: Type I ribosome-inactivating protein trichoanguina (294 aa).

Positions 1 to 19 (MALSFFFLAISLGSPTAIG) are cleaved as a signal peptide. Asparagine 70 carries an N-linked (GlcNAc...) asparagine glycan. Residues glutamate 177 and arginine 180 contribute to the active site. A glycan (N-linked (GlcNAc...) asparagine) is linked at asparagine 220. The propeptide occupies 265 to 294 (VGSEYDIPTTILHPGAMGMLHNQNGNYVTM).

This sequence belongs to the ribosome-inactivating protein family. Type 1 RIP subfamily.

It carries out the reaction Endohydrolysis of the N-glycosidic bond at one specific adenosine on the 28S rRNA.. Inhibits protein synthesis by depurinating 28S rRNA in ribosomes. In Trichosanthes anguina (Snake gourd), this protein is Type I ribosome-inactivating protein trichoanguina (TCA).